The primary structure comprises 364 residues: Fructose-bisphosphate aldolase A (364 aa).

At Tyr5 the chain carries Phosphotyrosine. Thr9 is modified (phosphothreonine). Phosphoserine is present on residues Ser36 and Ser39. Position 42 is an N6-acetyllysine; alternate (Lys42). Lys42 participates in a covalent cross-link: Glycyl lysine isopeptide (Lys-Gly) (interchain with G-Cter in SUMO1); alternate. Lys42 is covalently cross-linked (Glycyl lysine isopeptide (Lys-Gly) (interchain with G-Cter in SUMO2); alternate). Residue Arg43 participates in beta-D-fructose 1,6-bisphosphate binding. Phosphoserine is present on Ser46. Position 99 is an N6-(2-hydroxyisobutyryl)lysine (Lys99). N6-acetyllysine is present on Lys108. Lys111 carries the post-translational modification N6-acetyllysine; alternate. Lys111 is subject to N6-malonyllysine; alternate. Ser132 carries the phosphoserine modification. The residue at position 147 (Lys147) is an N6-(2-hydroxyisobutyryl)lysine. Glu188 functions as the Proton acceptor in the catalytic mechanism. Lys230 serves as the catalytic Schiff-base intermediate with dihydroxyacetone-P. A Phosphoserine modification is found at Ser272. Residues 272–274, Ser301, and Arg304 each bind beta-D-fructose 1,6-bisphosphate; that span reads SGG. At Lys312 the chain carries N6-malonyllysine. N6-acetyllysine is present on Lys330.

This sequence belongs to the class I fructose-bisphosphate aldolase family. As to quaternary structure, homotetramer. Interacts with SNX9 and WAS. Interacts with FBP2; the interaction blocks FBP2 inhibition by physiological concentrations of AMP and reduces inhibition by Ca(2+).

Its subcellular location is the cytoplasm. The protein resides in the myofibril. The protein localises to the sarcomere. It localises to the i band. It is found in the m line. It catalyses the reaction beta-D-fructose 1,6-bisphosphate = D-glyceraldehyde 3-phosphate + dihydroxyacetone phosphate. It participates in carbohydrate degradation; glycolysis; D-glyceraldehyde 3-phosphate and glycerone phosphate from D-glucose: step 4/4. Its function is as follows. Catalyzes the reversible conversion of beta-D-fructose 1,6-bisphosphate (FBP) into two triose phosphate and plays a key role in glycolysis and gluconeogenesis. In addition, may also function as scaffolding protein. In Homo sapiens (Human), this protein is Fructose-bisphosphate aldolase A.